Here is a 440-residue protein sequence, read N- to C-terminus: Sequestosome-1 (440 aa).

At Ala2 the chain carries N-acetylalanine. Residues Ala2–Arg50 are interaction with LCK. The PB1 domain occupies Ser3 to Lys102. A Phosphoserine modification is found at Ser24. The tract at residues Pro43–Arg107 is interaction with PRKCZ and dimerization. The interval Arg50–Asp80 is interaction with PAWR. Lys91 is covalently cross-linked (Glycyl lysine isopeptide (Lys-Gly) (interchain with G-Cter in ubiquitin)). Residues Val122–Ser224 are interaction with GABRR3. Residues His123 to Gly173 form a ZZ-type zinc finger. Zn(2+)-binding residues include Cys128, Cys131, Cys142, and Cys145. Position 148 is a phosphotyrosine (Tyr148). Cys151, Cys154, His160, and His163 together coordinate Zn(2+). Ser170 and Ser176 each carry phosphoserine. The interval Ser170 to Pro220 is LIM protein-binding (LB). Lys189 is covalently cross-linked (Glycyl lysine isopeptide (Lys-Gly) (interchain with G-Cter in ubiquitin)). Positions Pro196–Asn235 are disordered. 4 positions are modified to phosphoserine: Ser207, Ser233, Ser249, and Ser266. Positions Pro228–Ser233 match the TRAF6-binding motif. A disordered region spans residues Lys264 to Ala390. At Thr269 the chain carries Phosphothreonine. Residues Thr269–Leu440 form an interaction with NTRK1 region. Phosphoserine occurs at positions 272 and 282. The span at Ser283–Pro296 shows a compositional bias: low complexity. S-palmitoyl cysteine attachment occurs at residues Cys289 and Cys290. A Phosphoserine modification is found at Ser306. Residues Gln310–Glu324 are compositionally biased toward basic and acidic residues. The MAP1LC3B-binding stretch occupies residues Arg321–Ser342. A phosphoserine mark is found at Ser328 and Ser332. The short motif at Asp336–Leu341 is the LIR element. Over residues Asp337–Asp347 the composition is skewed to basic and acidic residues. An interaction with KEAP1 region spans residues Asp347–Glu352. At Ser349 the chain carries Phosphoserine; by ULK1. The segment covering Gly351–Gly373 has biased composition (polar residues). A phosphoserine mark is found at Ser355, Ser361, Ser365, and Ser366. The region spanning Glu389 to Ser434 is the UBA domain. A Phosphoserine; by CK2, ULK1 and TBK1 modification is found at Ser403. Ser407 is modified (phosphoserine; by ULK1). N6-acetyllysine; alternate is present on residues Lys420 and Lys435. Residue Lys420 forms a Glycyl lysine isopeptide (Lys-Gly) (interchain with G-Cter in ubiquitin); alternate linkage. A Glycyl lysine isopeptide (Lys-Gly) (interchain with G-Cter in SUMO2); alternate cross-link involves residue Lys435.

In terms of assembly, homooligomer or heterooligomer; may form homotypic arrays. Dimerization interferes with ubiquitin binding. Component of a ternary complex with PAWR and PRKCZ. Forms a complex with JUB/Ajuba, PRKCZ and TRAF6. Identified in a complex with TRAF6 and CYLD. Identified in a heterotrimeric complex with ubiquitin and ZFAND5, where ZFAND5 and SQSTM1 both interact with the same ubiquitin molecule. Interacts (via LIR motif) with MAP1LC3A and MAP1LC3B, as well as with other ATG8 family members, including GABARAP, GABARAPL1 and GABARAPL2; these interactions are necessary for the recruitment MAP1 LC3 family members to inclusion bodies containing polyubiquitinated protein aggregates and for their degradation by autophagy. Interacts directly with PRKCI and PRKCZ. Interacts with EBI3, LCK, RASA1, NR2F2, NTRK1, NTRK2, NTRK3, NBR1, MAP2K5 and MAPKAPK5. Upon TNF-alpha stimulation, interacts with RIPK1 probably bridging IKBKB to the TNF-R1 complex composed of TNF-R1/TNFRSF1A, TRADD and RIPK1. Interacts with the proteasome subunits PSMD4 and PSMC2. Interacts with TRAF6. Interacts with 'Lys-63'-linked polyubiquitinated MAPT/TAU. Interacts with FHOD3. Interacts with CYLD. Interacts with SESN1. Interacts with SESN2. Interacts with ULK1. Interacts with UBD. Interacts with WDR81; the interaction is direct and regulates the interaction of SQSTM1 with ubiquitinated proteins. Interacts with WDFY3; this interaction is required to recruit WDFY3 to cytoplasmic bodies and to PML bodies. Interacts with LRRC25. Interacts with STING1; leading to relocalization of STING1 to autophagosomes. Interacts (when phosphorylated at Ser-349) with KEAP1; the interaction is direct and inactivates the BCR(KEAP1) complex by sequestering KEAP1 in inclusion bodies, promoting its degradation. Interacts with MOAP1; promoting dissociation of SQSTM1 inclusion bodies that sequester KEAP1. Interacts with GBP1. Interacts with TAX1BP1. Interacts with (ubiquitinated) PEX5; specifically binds PEX5 ubiquitinated at 'Lys-209' in response to reactive oxygen species (ROS). Interacts (via PB1 domain) with TNS2; the interaction leads to sequestration of TNS2 in cytoplasmic aggregates with SQSTM1 and promotes TNS2 ubiquitination and proteasomal degradation. Interacts with IRS1; the interaction is disrupted by the presence of tensin TNS2. Interacts with TRIM5. Interacts with TRIM11 (when ubiquitinated); promoting AIM2 recruitment to autophagosomes and autophagy-dependent degradation of AIM2. Interacts with TRIM13. Interacts with TRIM16. Interacts with TRIM23. Interacts with TRIM50. Interacts with TRIM55. Interacts with ECSIT; this interaction inhibits TLR4 signaling via functional regulation of the TRAF6-ECSIT complex. Interacts with GABRR1, GABRR2 and GABRR3. Interacts with WDR83. Interacts with GRB2. Interacts with USP12; the interaction is independent of USP12 deubiquitinase activity and may be involved in regulation of autophagic flux. Interacts with ASB6. Post-translationally, phosphorylation at Ser-407 by ULK1 destabilizes the UBA dimer interface and increases binding affinity to ubiquitinated proteins. Phosphorylation at Ser-407 also primes for subsequent phosphorylation at Ser-403. Phosphorylation at Ser-403 by CK2 or ULK1 promotes binding to ubiquitinated proteins by increasing the affinity between the UBA domain and polyubiquitin chains. Phosphorylation at Ser-403 by ULK1 is stimulated by SESN2. Phosphorylated at Ser-403 by TBK1, leading to promote relocalization of 'Lys-63'-linked ubiquitinated STING1 to autophagosomes. Phosphorylation at Ser-349 by ULK1 promotes interaction with KEAP1 and inactivation of the BCR(KEAP1) complex, promoting NFE2L2/NRF2 nuclear accumulation and expression of phase II detoxifying enzymes. Phosphorylated in vitro by TTN. In terms of processing, ubiquitinated by UBE2J1 and RNF26 at Lys-435: ubiquitinated SQSTM1 attracts specific vesicle-associated adapters, forming a molecular bridge that restrains cognate vesicles in the perinuclear region and organizes the endosomal pathway for efficient cargo transport. Ubiquitination by UBE2D2 and UBE2D3 increases its ability to bind polyubiquitin chains by destabilizing the UBA dimer interface. Deubiquitination by USP15 releases target vesicles for fast transport into the cell periphery. Ubiquitinated by the BCR(KEAP1) complex at Lys-420, increasing SQSTM1 sequestering activity and promoting its degradation. Ubiquitinated via 'Lys-29' and 'Lys-33'-linked polyubiquitination leading to xenophagic targeting of bacteria and inhibition of their replication. Acetylated at Lys-420 and Lys-435 by KAT5/TIP60, promotes activity by destabilizing the UBA dimer interface and increases binding affinity to ubiquitinated proteins. Deacetylated by HDAC6. Post-translationally, palmitoylation at Cys-289 and Cys-290 by ZDHHC19 is required for efficient autophagic degradation of SQSTM1-cargo complexes by promoting affinity for ATG8 proteins and recruitment of p62 bodies to autophagosomes. Dealmitoylated at Cys-289 and Cys-290 by LYPLA1. In terms of processing, (Microbial infection) Cleaved by S.pyogenes SpeB protease; leading to its degradation. Degradation by SpeB prevents autophagy, promoting to S.pyogenes intracellular replication. (Microbial infection) Deubiquitinated by Epstein-Barr virus BPLF1; leading to inhibition of the recruitment of MAP1LC3A/LC3 to SQSTM1-positive structures. As to expression, ubiquitously expressed.

The protein localises to the cytoplasmic vesicle. It is found in the autophagosome. The protein resides in the preautophagosomal structure. Its subcellular location is the cytoplasm. It localises to the cytosol. The protein localises to the nucleus. It is found in the PML body. The protein resides in the late endosome. Its subcellular location is the lysosome. It localises to the endoplasmic reticulum. The protein localises to the myofibril. It is found in the sarcomere. Its function is as follows. Molecular adapter required for selective macroautophagy (aggrephagy) by acting as a bridge between polyubiquitinated proteins and autophagosomes. Promotes the recruitment of ubiquitinated cargo proteins to autophagosomes via multiple domains that bridge proteins and organelles in different steps. SQSTM1 first mediates the assembly and removal of ubiquitinated proteins by undergoing liquid-liquid phase separation upon binding to ubiquitinated proteins via its UBA domain, leading to the formation of insoluble cytoplasmic inclusions, known as p62 bodies. SQSTM1 then interacts with ATG8 family proteins on autophagosomes via its LIR motif, leading to p62 body recruitment to autophagosomes, followed by autophagic clearance of ubiquitinated proteins. SQSTM1 is itself degraded along with its ubiquitinated cargos. Also required to recruit ubiquitinated proteins to PML bodies in the nucleus. Also involved in autophagy of peroxisomes (pexophagy) in response to reactive oxygen species (ROS) by acting as a bridge between ubiquitinated PEX5 receptor and autophagosomes. Acts as an activator of the NFE2L2/NRF2 pathway via interaction with KEAP1: interaction inactivates the BCR(KEAP1) complex by sequestering the complex in inclusion bodies, promoting nuclear accumulation of NFE2L2/NRF2 and subsequent expression of cytoprotective genes. Promotes relocalization of 'Lys-63'-linked ubiquitinated STING1 to autophagosomes. Involved in endosome organization by retaining vesicles in the perinuclear cloud: following ubiquitination by RNF26, attracts specific vesicle-associated adapters, forming a molecular bridge that restrains cognate vesicles in the perinuclear region and organizes the endosomal pathway for efficient cargo transport. Sequesters tensin TNS2 into cytoplasmic puncta, promoting TNS2 ubiquitination and proteasomal degradation. May regulate the activation of NFKB1 by TNF-alpha, nerve growth factor (NGF) and interleukin-1. May play a role in titin/TTN downstream signaling in muscle cells. Adapter that mediates the interaction between TRAF6 and CYLD. The sequence is that of Sequestosome-1 from Homo sapiens (Human).